Reading from the N-terminus, the 554-residue chain is Nuclear division defective protein 1 (554 aa).

Disordered stretches follow at residues Met1 to Asp31 and Ile98 to Ser117. Residues Ile98 to Gln113 show a composition bias toward low complexity. Thr319 is subject to Phosphothreonine; by CDC28. Disordered regions lie at residues Pro410–Pro475 and Ser493–Gln554. Polar residues predominate over residues Thr411–Leu427. The span at Ser448–Lys465 shows a compositional bias: low complexity. Over residues Gly466–Pro475 the composition is skewed to basic residues. The segment covering Ser493–Asn513 has biased composition (low complexity). The segment covering Thr515–Arg524 has biased composition (basic residues). Over residues Ser525–Ser536 the composition is skewed to low complexity. Residues Arg539–Gln554 show a composition bias toward polar residues.

In terms of assembly, forms an activator complex with FKH2. Phosphorylation of Thr-319 by CDC28 is required for the interaction with FKH2 and recruitment to promoters.

The protein resides in the cytoplasm. It localises to the nucleus. Its function is as follows. Transcription activator involved in G2/M transcription through its association with FKH2. The chain is Nuclear division defective protein 1 (NDD1) from Saccharomyces cerevisiae (strain ATCC 204508 / S288c) (Baker's yeast).